Reading from the N-terminus, the 172-residue chain is Large ribosomal subunit protein eL20A (172 aa).

Ser32 is subject to Phosphoserine. Glycyl lysine isopeptide (Lys-Gly) (interchain with G-Cter in ubiquitin) cross-links involve residues Lys125, Lys131, and Lys149.

The protein belongs to the eukaryotic ribosomal protein eL20 family. In terms of assembly, component of the large ribosomal subunit (LSU). Mature yeast ribosomes consist of a small (40S) and a large (60S) subunit. The 40S small subunit contains 1 molecule of ribosomal RNA (18S rRNA) and 33 different proteins (encoded by 57 genes). The large 60S subunit contains 3 rRNA molecules (25S, 5.8S and 5S rRNA) and 46 different proteins (encoded by 81 genes). eL20 forms multiple interactions with RNA and proteins in the central protuberance, connecting components of core functional centers that are located far apart.

It is found in the cytoplasm. In terms of biological role, component of the ribosome, a large ribonucleoprotein complex responsible for the synthesis of proteins in the cell. The small ribosomal subunit (SSU) binds messenger RNAs (mRNAs) and translates the encoded message by selecting cognate aminoacyl-transfer RNA (tRNA) molecules. The large subunit (LSU) contains the ribosomal catalytic site termed the peptidyl transferase center (PTC), which catalyzes the formation of peptide bonds, thereby polymerizing the amino acids delivered by tRNAs into a polypeptide chain. The nascent polypeptides leave the ribosome through a tunnel in the LSU and interact with protein factors that function in enzymatic processing, targeting, and the membrane insertion of nascent chains at the exit of the ribosomal tunnel. In Saccharomyces cerevisiae (strain ATCC 204508 / S288c) (Baker's yeast), this protein is Large ribosomal subunit protein eL20A.